The sequence spans 402 residues: Olfactomedin-like protein 1 (402 aa).

Residues 1 to 28 form the signal peptide; the sequence is MMVALPGASASLVLFLAAFLPPLQHAQD. An N-linked (GlcNAc...) asparagine glycan is attached at Asn66. The stretch at 73–135 forms a coiled coil; it reads RCQTHTNEYR…EAEEEKKIRT (63 aa). N-linked (GlcNAc...) asparagine glycans are attached at residues Asn138 and Asn183. The Olfactomedin-like domain occupies 140–397; the sequence is SCDNMLMAIK…QIIYKLQTKK (258 aa). Residues Cys141 and Cys324 are joined by a disulfide bond.

In terms of processing, highly N-glycosylated.

The protein localises to the secreted. The chain is Olfactomedin-like protein 1 (Olfml1) from Rattus norvegicus (Rat).